A 1339-amino-acid chain; its full sequence is Receptor tyrosine-protein kinase erbB-3 (1339 aa).

The first 19 residues, 1–19, serve as a signal peptide directing secretion; the sequence is MRATGTLQVLCFLLSLARG. Over 20-643 the chain is Extracellular; it reads SEMGNSQAVC…EVLMSKPHLV (624 aa). The N-linked (GlcNAc...) asparagine glycan is linked to asparagine 126. Cystine bridges form between cysteine 186–cysteine 194, cysteine 190–cysteine 202, cysteine 210–cysteine 218, cysteine 214–cysteine 226, cysteine 227–cysteine 235, cysteine 231–cysteine 243, cysteine 246–cysteine 255, cysteine 259–cysteine 286, cysteine 290–cysteine 301, cysteine 305–cysteine 320, and cysteine 323–cysteine 327. A glycan (N-linked (GlcNAc...) asparagine) is linked at asparagine 250. Asparagine 353, asparagine 408, asparagine 414, asparagine 437, and asparagine 469 each carry an N-linked (GlcNAc...) asparagine glycan. Cystine bridges form between cysteine 500–cysteine 509, cysteine 504–cysteine 517, cysteine 520–cysteine 529, cysteine 533–cysteine 549, cysteine 552–cysteine 565, cysteine 556–cysteine 573, cysteine 576–cysteine 585, cysteine 589–cysteine 610, cysteine 613–cysteine 621, and cysteine 617–cysteine 629. The N-linked (GlcNAc...) asparagine glycan is linked to asparagine 522. Asparagine 566 carries an N-linked (GlcNAc...) asparagine glycan. An N-linked (GlcNAc...) asparagine glycan is attached at asparagine 616. A helical membrane pass occupies residues 644–662; it reads IAVTVGLAVILMILGGSFL. The Cytoplasmic portion of the chain corresponds to 663–1339; the sequence is YWRGRRIQNK…LFPKANAQRT (677 aa). Serine 684 bears the Phosphoserine mark. Residues 707 to 964 form the Protein kinase domain; sequence LRKLKVLGSG…TFKELANEFT (258 aa). ATP is bound by residues 713–721, lysine 740, 786–788, and 832–837; these read LGSGVFGTV, QYL, and DLALRN. Residue aspartate 832 is the Proton acceptor of the active site. Serine 980 is subject to Phosphoserine. Residues 1023 to 1036 are compositionally biased toward low complexity; that stretch reads SLGSALSLPTGTLT. Disordered regions lie at residues 1023–1052 and 1078–1215; these read SLGS…SGYM and PISL…GSLE. The segment covering 1039–1052 has biased composition (polar residues); that stretch reads RGSQSLLSPSSGYM. A compositionally biased stretch (low complexity) spans 1172 to 1184; sequence GTLSSVGLSSVLG. The segment covering 1185–1195 has biased composition (acidic residues); that stretch reads TEEEDEDEEYE.

This sequence belongs to the protein kinase superfamily. Tyr protein kinase family. EGF receptor subfamily. In terms of assembly, monomer and homodimer. Heterodimer with each of the other ERBB receptors (Potential). Interacts with CSPG5, PA2G4, GRB7, MYOC and MUC1. Found in a ternary complex with NRG1 and ITGAV:ITGB3 or ITGA6:ITGB4. Post-translationally, autophosphorylated. Ligand-binding increases phosphorylation on tyrosine residues and promotes its association with the p85 subunit of phosphatidylinositol 3-kinase.

The protein resides in the membrane. It catalyses the reaction L-tyrosyl-[protein] + ATP = O-phospho-L-tyrosyl-[protein] + ADP + H(+). In terms of biological role, tyrosine-protein kinase that plays an essential role as cell surface receptor for neuregulins. Binds to neuregulin-1 (NRG1) and is activated by it; ligand-binding increases phosphorylation on tyrosine residues and promotes its association with the p85 subunit of phosphatidylinositol 3-kinase. May also be activated by CSPG5. Involved in the regulation of myeloid cell differentiation. The chain is Receptor tyrosine-protein kinase erbB-3 (Erbb3) from Rattus norvegicus (Rat).